The sequence spans 447 residues: GTPase Der (447 aa).

2 EngA-type G domains span residues 3-167 and 181-354; these read PVIA…FAER and TRIA…AAAM. GTP is bound by residues 9-16, 56-60, 119-122, 187-194, 234-238, and 299-302; these read GRPNVGKS, DTGGF, NKAE, DTAGL, and NKWD. A KH-like domain is found at 355–439; that stretch reads VKLPTPKLTR…PLRIEFRTNK (85 aa).

Belongs to the TRAFAC class TrmE-Era-EngA-EngB-Septin-like GTPase superfamily. EngA (Der) GTPase family. In terms of assembly, associates with the 50S ribosomal subunit.

In terms of biological role, GTPase that plays an essential role in the late steps of ribosome biogenesis. In Ralstonia nicotianae (strain ATCC BAA-1114 / GMI1000) (Ralstonia solanacearum), this protein is GTPase Der.